Here is a 92-residue protein sequence, read N- to C-terminus: MSTRRQAITLYRNLLRESEKLPAYNFRMYAVRKIRDAFRANKAIRDFAEIDRQMEAGKQNLELIRRQVIIGHLYTADKLVIENKKTLSPLDD.

Positions 40 to 68 (ANKAIRDFAEIDRQMEAGKQNLELIRRQV) form a coiled coil.

It belongs to the complex I LYR family. In terms of assembly, component of the mitochondrial core iron-sulfur cluster (ISC) assembly complex at least composed of the cysteine desulfurase Nfs1, the scaffold protein IscU, the accessory protein bcn92/Isd11/Lyrm4, and probably fh/frataxin. Interacts with Nfs1.

The protein localises to the mitochondrion. Its function is as follows. Stabilizing factor of the core iron-sulfur cluster (ISC) assembly complex that regulates the stability and cysteine desulfurase activity of Nfs1 and participates in the [2Fe-2S] clusters assembly on the scaffolding protein IscU. The chain is LYR motif-containing protein 4 homolog from Drosophila subobscura (Fruit fly).